Reading from the N-terminus, the 543-residue chain is Alanine aminotransferase 1, mitochondrial (543 aa).

The transit peptide at Met-1–Met-55 directs the protein to the mitochondrion. The segment covering Ser-43–Ser-63 has biased composition (low complexity). Residues Ser-43–Leu-64 are disordered. Ser-56 bears the N-acetylserine mark. Residues Tyr-173, Ala-209–Ser-210, Tyr-235, Asn-291, Tyr-322, and Ser-354–Gln-356 each bind pyridoxal 5'-phosphate. An N6-(pyridoxal phosphate)lysine modification is found at Lys-360. The pyridoxal 5'-phosphate site is built by Arg-369 and Asn-397.

The protein belongs to the class-I pyridoxal-phosphate-dependent aminotransferase family. Alanine aminotransferase subfamily. As to quaternary structure, homodimer. Requires pyridoxal 5'-phosphate as cofactor. In terms of processing, the N-terminus is blocked. As to expression, mostly expressed in roots and shoots, mostly in vascular tissues, and, to a lower extent, in flowers and leaves.

The protein resides in the mitochondrion. The catalysed reaction is L-alanine + 2-oxoglutarate = pyruvate + L-glutamate. The protein operates within photosynthesis; C4 acid pathway. Its pathway is amino-acid degradation; L-alanine degradation via transaminase pathway; pyruvate from L-alanine: step 1/1. Is the major alanine aminotransferase in roots that catalyzes the conversion of alanine to pyruvate. Involved in the rapid conversion of alanine to pyruvate during recovery from low-oxygen stress. The sequence is that of Alanine aminotransferase 1, mitochondrial from Arabidopsis thaliana (Mouse-ear cress).